We begin with the raw amino-acid sequence, 440 residues long: Cytochrome c biogenesis protein Ccs1 (440 aa).

The next 3 helical transmembrane spans lie at 25 to 45 (LQFS…GTVI), 84 to 104 (TWWF…CSIS), and 170 to 190 (LAPI…VLGL).

Belongs to the Ccs1/CcsB family. In terms of assembly, may interact with CcsA.

It localises to the plastid. The protein resides in the chloroplast thylakoid membrane. In terms of biological role, required during biogenesis of c-type cytochromes (cytochrome c6 and cytochrome f) at the step of heme attachment. The protein is Cytochrome c biogenesis protein Ccs1 of Pyropia yezoensis (Susabi-nori).